The chain runs to 228 residues: Ankyrin repeat domain-containing protein 46 (228 aa).

ANK repeat units follow at residues 11–40 (QTNV…DPNI), 44–73 (RGRT…DLLA), 77–103 (QGNT…KIDI), and 107–138 (QGAT…EVKG). Residues 195–215 (VLLLIFVIALLSLGIAYYVSG) traverse the membrane as a helical segment.

The protein resides in the membrane. In Pongo abelii (Sumatran orangutan), this protein is Ankyrin repeat domain-containing protein 46 (ANKRD46).